A 182-amino-acid chain; its full sequence is Methyl-coenzyme M reductase operon protein C (182 aa).

In terms of assembly, MCR is composed of three subunits: alpha, beta, and gamma. The function of proteins C and D is not known.

The sequence is that of Methyl-coenzyme M reductase operon protein C (mcrC) from Methanococcus voltae.